The primary structure comprises 643 residues: Phosphomethylpyrimidine synthase (643 aa).

Substrate is bound by residues N248, M277, Y306, H342, 362 to 364 (SRG), 403 to 406 (DGLR), and E442. H446 serves as a coordination point for Zn(2+). Y469 provides a ligand contact to substrate. H510 provides a ligand contact to Zn(2+). [4Fe-4S] cluster-binding residues include C590, C593, and C598.

The protein belongs to the ThiC family. As to quaternary structure, homodimer. The cofactor is [4Fe-4S] cluster.

The enzyme catalyses 5-amino-1-(5-phospho-beta-D-ribosyl)imidazole + S-adenosyl-L-methionine = 4-amino-2-methyl-5-(phosphooxymethyl)pyrimidine + CO + 5'-deoxyadenosine + formate + L-methionine + 3 H(+). Its pathway is cofactor biosynthesis; thiamine diphosphate biosynthesis. Its function is as follows. Catalyzes the synthesis of the hydroxymethylpyrimidine phosphate (HMP-P) moiety of thiamine from aminoimidazole ribotide (AIR) in a radical S-adenosyl-L-methionine (SAM)-dependent reaction. This chain is Phosphomethylpyrimidine synthase, found in Burkholderia lata (strain ATCC 17760 / DSM 23089 / LMG 22485 / NCIMB 9086 / R18194 / 383).